Here is a 102-residue protein sequence, read N- to C-terminus: Cytochrome b (102 aa).

A run of 3 helical transmembrane segments spans residues 1–21 (FGSL…FLAM), 45–66 (WLIR…YLHI), and 81–101 (WNIG…GYVL). Histidine 51 and histidine 65 together coordinate heme b.

It belongs to the cytochrome b family. The cytochrome bc1 complex contains 3 respiratory subunits (MT-CYB, CYC1 and UQCRFS1), 2 core proteins (UQCRC1 and UQCRC2) and probably 6 low-molecular weight proteins. Heme b serves as cofactor.

It is found in the mitochondrion inner membrane. Component of the ubiquinol-cytochrome c reductase complex (complex III or cytochrome b-c1 complex) that is part of the mitochondrial respiratory chain. The b-c1 complex mediates electron transfer from ubiquinol to cytochrome c. Contributes to the generation of a proton gradient across the mitochondrial membrane that is then used for ATP synthesis. The sequence is that of Cytochrome b (mt-cyb) from Megalops atlanticus (Tarpon).